The chain runs to 335 residues: Nuclear transcription factor Y subunit gamma (335 aa).

This sequence belongs to the NFYC/HAP5 subunit family. In terms of assembly, heterotrimeric transcription factor composed of three components, NF-YA, NF-YB and NF-YC. NF-YB and NF-YC must interact and dimerize for NF-YA association and DNA binding.

Its subcellular location is the nucleus. In terms of biological role, component of the sequence-specific heterotrimeric transcription factor (NF-Y) which specifically recognizes a 5'-CCAAT-3' box motif found in the promoters of its target genes. NF-Y can function as both an activator and a repressor, depending on its interacting cofactors. The polypeptide is Nuclear transcription factor Y subunit gamma (Nfyc) (Rattus norvegicus (Rat)).